Reading from the N-terminus, the 1232-residue chain is Pyruvate:ferredoxin oxidoreductase (1232 aa).

Thr-31 serves as a coordination point for pyruvate. Thiamine diphosphate is bound at residue Glu-64. A pyruvate-binding site is contributed by Arg-114. Residues 427-431, Lys-459, Asn-560, and Asn-602 contribute to the CoA site; that span reads ADGTV. 4Fe-4S ferredoxin-type domains lie at 680-709 and 736-767; these read NVPQWVPENCIQCNQCAFVCPHSAILPVLA and FRIQINTLDCMGCGNCADICPPKEKALVMQPL. The [4Fe-4S] cluster site is built by Cys-689, Cys-692, Cys-695, Cys-699, Cys-745, Cys-748, Cys-751, Cys-755, Cys-812, and Cys-815. Residues Glu-817, Cys-840, and 962–965 contribute to the thiamine diphosphate site; that span reads GDGW. Cys-840 contributes to the [4Fe-4S] cluster binding site. Residue Asp-963 participates in Mg(2+) binding. Residues Asp-983 and Asn-985 each contribute to the Ca(2+) site. 2 residues coordinate Mg(2+): Thr-991 and Val-993. A thiamine diphosphate-binding site is contributed by 991–996; it reads TEVYSN. Positions 1056, 1059, 1061, and 1063 each coordinate Ca(2+). Cys-1071 contributes to the [4Fe-4S] cluster binding site. A disulfide bridge links Cys-1195 with Cys-1212. Residues 1197 to 1232 form a disordered region; the sequence is RDDTPMMARPDSGEACDQNRAGTSEQQGDLSKRTKK. The segment covering 1216–1225 has biased composition (polar residues); sequence RAGTSEQQGD.

Belongs to the pyruvate:ferredoxin/flavodoxin oxidoreductase family. Homodimer. It depends on [4Fe-4S] cluster as a cofactor. The cofactor is thiamine diphosphate. Mg(2+) is required as a cofactor.

It is found in the cytoplasm. The catalysed reaction is 2 oxidized [2Fe-2S]-[ferredoxin] + pyruvate + CoA = 2 reduced [2Fe-2S]-[ferredoxin] + acetyl-CoA + CO2 + H(+). Functionally, catalyzes the ferredoxin-dependent oxidative decarboxylation of pyruvate. Required for the transfer of electrons from pyruvate to ferredoxin. Ferredoxin I and ferredoxin II, which are single 4Fe-4S cluster ferredoxins are the most effective electron carriers of POR. The polypeptide is Pyruvate:ferredoxin oxidoreductase (Desulfocurvibacter africanus (Desulfovibrio africanus)).